Consider the following 861-residue polypeptide: Nuclear pore complex protein NUP93A (861 aa).

The protein belongs to the nucleoporin interacting component (NIC) family. As to quaternary structure, part of the nuclear pore complex (NPC). The NPC has an eight-fold symmetrical structure comprising a central transport channel and two rings, the cytoplasmic and nuclear rings, to which eight filaments are attached. The cytoplasmic filaments have loose ends, while the nuclear filaments are joined in a distal ring, forming a nuclear basket. NPCs are highly dynamic in configuration and composition, and can be devided in 3 subcomplexes, the NUP62 subcomplex, the NUP107-160 subcomplex and the NUP93 subcomplex, containing approximately 30 different nucleoporin proteins.

The protein resides in the nucleus envelope. The protein localises to the nucleus. It localises to the nuclear pore complex. In Arabidopsis thaliana (Mouse-ear cress), this protein is Nuclear pore complex protein NUP93A.